A 254-amino-acid polypeptide reads, in one-letter code: Protein CbbY, plasmid (254 aa).

Belongs to the HAD-like hydrolase superfamily. CbbY/CbbZ/Gph/YieH family.

The chain is Protein CbbY, plasmid (cbbYP) from Cupriavidus necator (strain ATCC 17699 / DSM 428 / KCTC 22496 / NCIMB 10442 / H16 / Stanier 337) (Ralstonia eutropha).